Consider the following 101-residue polypeptide: Large ribosomal subunit protein uL23 (101 aa).

The protein belongs to the universal ribosomal protein uL23 family. Part of the 50S ribosomal subunit. Contacts protein L29, and trigger factor when it is bound to the ribosome.

In terms of biological role, one of the early assembly proteins it binds 23S rRNA. One of the proteins that surrounds the polypeptide exit tunnel on the outside of the ribosome. Forms the main docking site for trigger factor binding to the ribosome. The protein is Large ribosomal subunit protein uL23 of Wigglesworthia glossinidia brevipalpis.